A 189-amino-acid polypeptide reads, in one-letter code: Dual specificity phosphatase 21 (189 aa).

The region spanning 20–161 (GLSQITASLF…LIHYEFKLFS (142 aa)) is the Tyrosine-protein phosphatase domain. The tract at residues 43-128 (SNNHITTIIN…YLMKYHNMTL (86 aa)) is sufficient for mitochondrial localization. Cys105 acts as the Phosphocysteine intermediate in catalysis.

It belongs to the protein-tyrosine phosphatase family. Non-receptor class dual specificity subfamily. As to quaternary structure, microtubule inner protein component of sperm flagellar doublet microtubules. Selectively expressed in testis.

It localises to the cytoplasm. The protein resides in the nucleus. The protein localises to the mitochondrion inner membrane. Its subcellular location is the cytoskeleton. It is found in the flagellum axoneme. It carries out the reaction O-phospho-L-tyrosyl-[protein] + H2O = L-tyrosyl-[protein] + phosphate. The catalysed reaction is O-phospho-L-seryl-[protein] + H2O = L-seryl-[protein] + phosphate. The enzyme catalyses O-phospho-L-threonyl-[protein] + H2O = L-threonyl-[protein] + phosphate. Protein phosphatase component of the sperm flagellar doublet microtubules. May act as a regulator of sperm motility by mediating dephosphorylation of sperm doublet microtubule proteins. Can dephosphorylate single and diphosphorylated synthetic MAPK peptides, with preference for the phosphotyrosine and diphosphorylated forms over phosphothreonine. The polypeptide is Dual specificity phosphatase 21 (Mus musculus (Mouse)).